The following is an 87-amino-acid chain: DNA-directed RNA polymerase subunit omega (87 aa).

It belongs to the RNA polymerase subunit omega family. In terms of assembly, the RNAP catalytic core consists of 2 alpha, 1 beta, 1 beta' and 1 omega subunit. When a sigma factor is associated with the core the holoenzyme is formed, which can initiate transcription.

It catalyses the reaction RNA(n) + a ribonucleoside 5'-triphosphate = RNA(n+1) + diphosphate. Functionally, promotes RNA polymerase assembly. Latches the N- and C-terminal regions of the beta' subunit thereby facilitating its interaction with the beta and alpha subunits. The chain is DNA-directed RNA polymerase subunit omega from Pseudomonas savastanoi pv. phaseolicola (strain 1448A / Race 6) (Pseudomonas syringae pv. phaseolicola (strain 1448A / Race 6)).